The sequence spans 1108 residues: Unconventional myosin-Ie (1108 aa).

A Myosin motor domain is found at 19 to 692; it reads SGVDDMVLLS…SLFLLEEMRE (674 aa). Residue 112-119 participates in ATP binding; that stretch reads GESGAGKT. Residues 581 to 591 form an actin-binding region; the sequence is PHYIRCIKPNE. The IQ domain maps to 695-724; it reads YDGYARVIQKSWRKFVARKKYVQMREEASD. The TH1 domain occupies 730 to 922; that stretch reads KERRRNSINR…NKVLQVSIGP (193 aa). The disordered stretch occupies residues 919 to 966; it reads SIGPGLPKNSRPTRRNTTQNTGYSSGTQNANYPVRAAPPPPGYHQNGV. Residues 933–949 show a composition bias toward polar residues; sequence RNTTQNTGYSSGTQNAN. Phosphoserine occurs at positions 980 and 1002. The segment at 993–1053 is disordered; the sequence is ARPPLPRQQS…KPQPKPKPQV (61 aa). The span at 999-1013 shows a compositional bias: polar residues; it reads RQQSTSSDRVSQTPE. Pro residues predominate over residues 1035-1052; that stretch reads RPPPAGGRPKPQPKPKPQ. Positions 1051 to 1108 constitute an SH3 domain; the sequence is PQVPQCKALYAYDAQDTDELSFNANDIIDIIKEDPSGWWTGRLRGKQGLFPNNYVTKI.

The protein belongs to the TRAFAC class myosin-kinesin ATPase superfamily. Myosin family. In terms of assembly, interacts with CALM and F-actin. Interacts (via SH3 domain) with SYNJ1, DNM1 and DNM2. Interacts with ARL14EP. Interacts with CARMIL1. In terms of tissue distribution, expressed in the immune system. In the kidney, predominantly expressed in the glomerulus, including podocytes.

The protein localises to the cytoplasm. It localises to the cytoskeleton. Its subcellular location is the cytoplasmic vesicle. It is found in the clathrin-coated vesicle. The protein resides in the cell junction. Its function is as follows. Actin-based motor molecule with ATPase activity. Unconventional myosins serve in intracellular movements. Their highly divergent tails bind to membranous compartments, which are then moved relative to actin filaments. Binds to membranes containing anionic phospholipids via its tail domain. Involved in clathrin-mediated endocytosis and intracellular movement of clathrin-coated vesicles. Required for normal morphology of the glomerular basement membrane, normal development of foot processes by kidney podocytes and normal kidney function. In dendritic cells, may control the movement of class II-containing cytoplasmic vesicles along the actin cytoskeleton by connecting them with the actin network via ARL14EP and ARL14. This is Unconventional myosin-Ie (MYO1E) from Homo sapiens (Human).